Consider the following 120-residue polypeptide: Small ribosomal subunit protein uS17 (120 aa).

Low complexity predominate over residues 1-22 (MMAEAKTGAKATKSAAAGAADG). The disordered stretch occupies residues 1 to 46 (MMAEAKTGAKATKSAAAGAADGASKEKGPKHTPSPPKPSGRRKTRI).

This sequence belongs to the universal ribosomal protein uS17 family. As to quaternary structure, part of the 30S ribosomal subunit.

Its function is as follows. One of the primary rRNA binding proteins, it binds specifically to the 5'-end of 16S ribosomal RNA. The sequence is that of Small ribosomal subunit protein uS17 from Mycobacterium ulcerans (strain Agy99).